The sequence spans 1229 residues: Chitin synthase 4 (1229 aa).

Residues 1-196 (MSLPERPGAK…IVKEGKRKEK (196 aa)) are disordered. Residues 1–202 (MSLPERPGAK…RKEKIPEQLR (202 aa)) lie on the Cytoplasmic side of the membrane. Residues 18–27 (SYRKSPSRRN) are compositionally biased toward basic residues. Polar residues predominate over residues 43–66 (GQHQRGPSVNSFAETIRSPNSNIE). Residues 92 to 105 (IRPERNRIDRDHPN) are compositionally biased toward basic and acidic residues. Residues 137–150 (SGPPSGSNSASGSG) show a composition bias toward low complexity. Composition is skewed to basic and acidic residues over residues 164 to 177 (SGRE…DNTR) and 187 to 196 (IVKEGKRKEK). A helical membrane pass occupies residues 203–223 (PPSAWNVYCAVITFWSPDFIM). Topologically, residues 224-240 (KCCGMPAKAQRRAWREK) are extracellular. The helical transmembrane segment at 241–261 (IGLISLILIIMGVVGFLTFGF) threads the bilayer. Residues 262–495 (NQAVCGGPVL…IKVGTVDTDT (234 aa)) lie on the Cytoplasmic side of the membrane. A helical transmembrane segment spans residues 496-516 (VGCIAAKVVLYVSLALILSVV). At 517–1054 (GARFTLALIF…LCGTFCFSMQ (538 aa)) the chain is on the extracellular side. Disordered regions lie at residues 539-589 (TSQT…RSSF) and 601-648 (GAER…DPYA). Positions 568 to 581 (GDVGSSVAGASSSD) are enriched in low complexity. 3 N-linked (GlcNAc...) asparagine glycosylation sites follow: Asn608, Asn635, and Asn1030. The span at 608–648 (NKSMPTTMASQASGGYMGPSSTAYRETNESRTSFLKSDPYA) shows a compositional bias: polar residues. The helical transmembrane segment at 1055 to 1075 (FVIFIELIGTLVLPAAIAFTF) threads the bilayer. Topologically, residues 1076–1088 (YVVIISIINQPPQ) are cytoplasmic. The helical transmembrane segment at 1089–1109 (IIPLVLLGLILGLPAILIIIT) threads the bilayer. Residues 1110-1114 (AHSWS) are Extracellular-facing. Residues 1115 to 1135 (YVLWMLIYLLSLPVWNFVLPA) form a helical membrane-spanning segment. Residues 1136-1229 (YAFWKFDDFS…QQYDEYYSDA (94 aa)) lie on the Cytoplasmic side of the membrane. The interval 1210–1229 (WASAPPHHHQQQYDEYYSDA) is disordered.

This sequence belongs to the chitin synthase family. Class IV subfamily.

It localises to the cell membrane. It carries out the reaction [(1-&gt;4)-N-acetyl-beta-D-glucosaminyl](n) + UDP-N-acetyl-alpha-D-glucosamine = [(1-&gt;4)-N-acetyl-beta-D-glucosaminyl](n+1) + UDP + H(+). In terms of biological role, polymerizes chitin, a structural polymer of the cell wall and septum, by transferring the sugar moiety of UDP-GlcNAc to the non-reducing end of the growing chitin polymer. Might function as a negative regulator on expression of other CHS genes. The protein is Chitin synthase 4 of Pyricularia oryzae (strain 70-15 / ATCC MYA-4617 / FGSC 8958) (Rice blast fungus).